The following is a 397-amino-acid chain: DNA-directed RNA polymerase subunit Rpo1C (397 aa).

Belongs to the RNA polymerase beta' chain family. As to quaternary structure, part of the RNA polymerase complex.

The protein resides in the cytoplasm. The enzyme catalyses RNA(n) + a ribonucleoside 5'-triphosphate = RNA(n+1) + diphosphate. In terms of biological role, DNA-dependent RNA polymerase (RNAP) catalyzes the transcription of DNA into RNA using the four ribonucleoside triphosphates as substrates. Forms part of the jaw domain. The polypeptide is DNA-directed RNA polymerase subunit Rpo1C (Halobacterium salinarum (strain ATCC 29341 / DSM 671 / R1)).